Here is a 1393-residue protein sequence, read N- to C-terminus: DNA-directed RNA polymerase subunit beta' (1393 aa).

4 residues coordinate Zn(2+): cysteine 72, cysteine 74, cysteine 87, and cysteine 90. Mg(2+) contacts are provided by aspartate 463, aspartate 465, and aspartate 467. 4 residues coordinate Zn(2+): cysteine 812, cysteine 887, cysteine 894, and cysteine 897.

The protein belongs to the RNA polymerase beta' chain family. In terms of assembly, the RNAP catalytic core consists of 2 alpha, 1 beta, 1 beta' and 1 omega subunit. When a sigma factor is associated with the core the holoenzyme is formed, which can initiate transcription. Mg(2+) is required as a cofactor. The cofactor is Zn(2+).

It catalyses the reaction RNA(n) + a ribonucleoside 5'-triphosphate = RNA(n+1) + diphosphate. Its function is as follows. DNA-dependent RNA polymerase catalyzes the transcription of DNA into RNA using the four ribonucleoside triphosphates as substrates. The chain is DNA-directed RNA polymerase subunit beta' from Chlamydia caviae (strain ATCC VR-813 / DSM 19441 / 03DC25 / GPIC) (Chlamydophila caviae).